A 315-amino-acid chain; its full sequence is Biotin synthase (315 aa).

In terms of domain architecture, Radical SAM core spans 39-266 (NSLQFATLLS…KSAIRLTAGR (228 aa)). [4Fe-4S] cluster contacts are provided by Cys54, Cys58, and Cys61. Cys98, Cys129, Cys189, and Arg261 together coordinate [2Fe-2S] cluster.

The protein belongs to the radical SAM superfamily. Biotin synthase family. Homodimer. Requires [4Fe-4S] cluster as cofactor. It depends on [2Fe-2S] cluster as a cofactor.

It catalyses the reaction (4R,5S)-dethiobiotin + (sulfur carrier)-SH + 2 reduced [2Fe-2S]-[ferredoxin] + 2 S-adenosyl-L-methionine = (sulfur carrier)-H + biotin + 2 5'-deoxyadenosine + 2 L-methionine + 2 oxidized [2Fe-2S]-[ferredoxin]. The protein operates within cofactor biosynthesis; biotin biosynthesis; biotin from 7,8-diaminononanoate: step 2/2. In terms of biological role, catalyzes the conversion of dethiobiotin (DTB) to biotin by the insertion of a sulfur atom into dethiobiotin via a radical-based mechanism. This chain is Biotin synthase, found in Legionella pneumophila (strain Lens).